Reading from the N-terminus, the 554-residue chain is Intraflagellar transport protein 56 (554 aa).

A disordered region spans residues 1-23 (MMLSRAKPAVGNEVQQIDKKKKK). TPR repeat units lie at residues 57–90 (EDTE…EGCN), 92–125 (DVWV…LQNR), 151–184 (IEDQ…NRDF), and 468–501 (ANDC…EGKR).

The protein belongs to the IFT56 family. As to quaternary structure, component of the IFT complex B.

The protein localises to the cell projection. Its subcellular location is the cilium. Its function is as follows. Component of the intraflagellar transport (IFT) complex B required for transport of proteins in the motile cilium. Required for transport of specific ciliary cargo proteins related to motility, while it is neither required for IFT complex B assembly or motion nor for cilium assembly. Plays a key role in maintaining the integrity of the IFT complex B and the proper ciliary localization of the IFT complex B components. Essential for maintaining proper microtubule organization within the ciliary axoneme. The sequence is that of Intraflagellar transport protein 56 from Xenopus tropicalis (Western clawed frog).